A 151-amino-acid chain; its full sequence is Nucleoside diphosphate kinase (151 aa).

ATP-binding residues include Lys-9, Phe-57, Arg-86, Thr-92, Arg-103, and Asn-113. Residue His-116 is the Pros-phosphohistidine intermediate of the active site.

This sequence belongs to the NDK family. In terms of assembly, homotetramer. Mg(2+) serves as cofactor.

It is found in the cytoplasm. It carries out the reaction a 2'-deoxyribonucleoside 5'-diphosphate + ATP = a 2'-deoxyribonucleoside 5'-triphosphate + ADP. It catalyses the reaction a ribonucleoside 5'-diphosphate + ATP = a ribonucleoside 5'-triphosphate + ADP. In terms of biological role, major role in the synthesis of nucleoside triphosphates other than ATP. The ATP gamma phosphate is transferred to the NDP beta phosphate via a ping-pong mechanism, using a phosphorylated active-site intermediate. The polypeptide is Nucleoside diphosphate kinase (Chloroflexus aurantiacus (strain ATCC 29364 / DSM 637 / Y-400-fl)).